Here is a 124-residue protein sequence, read N- to C-terminus: Translation initiation factor 5A (124 aa).

Lys-36 is modified (hypusine).

This sequence belongs to the eIF-5A family.

The protein localises to the cytoplasm. In terms of biological role, functions by promoting the formation of the first peptide bond. This chain is Translation initiation factor 5A, found in Haloquadratum walsbyi (strain DSM 16790 / HBSQ001).